Here is a 211-residue protein sequence, read N- to C-terminus: Endonuclease YncB (211 aa).

The N-terminal stretch at 1–19 (MKKILISMIAIVLSITLAA) is a signal peptide. Cys-20 carries N-palmitoyl cysteine lipidation. A lipid anchor (S-diacylglycerol cysteine) is attached at Cys-20. The segment at 24 to 63 (HAAKNHSDSNGTEQVSQDTHSNEYNQTEQKAGTPHSKNQK) is disordered. Over residues 31 to 53 (DSNGTEQVSQDTHSNEYNQTEQK) the composition is skewed to polar residues. A TNase-like domain is found at 64–197 (KLVNVTLDRA…KSDKLSIWSK (134 aa)). Asp-77 contacts Ca(2+). Residue Arg-91 is part of the active site. Ca(2+) is bound by residues Asp-96 and Thr-97. Residues Glu-99 and Arg-142 contribute to the active site.

It belongs to the thermonuclease family. It depends on Ca(2+) as a cofactor.

It localises to the cell membrane. With respect to regulation, inhibited by aurintricalboxylic acid but not by Zn(2+). Shows DNase activity on double strand DNA. This Bacillus subtilis (strain 168) protein is Endonuclease YncB (yncB).